A 1632-amino-acid polypeptide reads, in one-letter code: Guanine exchange factor for Rac 30 (1632 aa).

Residues 16–122 (NIQIDSFTSW…VIFLLIQKIK (107 aa)) form the Calponin-homology (CH) domain. Disordered stretches follow at residues 134-155 (QGET…TPTK) and 171-285 (FSHI…PTTG). 2 stretches are compositionally biased toward low complexity: residues 137–154 (TTGT…TTPT) and 180–284 (QSSS…SPTT). IQ domains follow at residues 388–417 (DLKK…KYKQ) and 432–461 (AYRG…LYRR). The 179-residue stretch at 460 to 638 (RRNEIVKEIL…KDVAEYVNEK (179 aa)) folds into the DH domain. A compositionally biased stretch (low complexity) spans 775 to 795 (QINNQNNNQNNNQNNNLNNNN). The interval 775-798 (QINNQNNNQNNNQNNNLNNNNDDS) is disordered. The PH 1 domain occupies 940–1038 (DSEFSNVLEK…WISLIRLSIK (99 aa)). Positions 1138–1156 (STSASQSQSQSPSPSPSHS) are enriched in low complexity. Residues 1138-1161 (STSASQSQSQSPSPSPSHSINQKQ) form a disordered region. An Arf-GAP domain is found at 1271–1389 (NSCGDNINND…NNNNNNSQNG (119 aa)). Residues 1286–1309 (CAECGASDPSWVSINYGVVVCLDC) form a C4-type zinc finger. Composition is skewed to low complexity over residues 1380–1402 (NNNN…TSTT), 1409–1431 (STPT…TTQT), and 1441–1481 (SSPT…TTPT). A disordered region spans residues 1380-1521 (NNNNNNSQNG…SSHAITERKT (142 aa)). The segment covering 1500–1515 (DTSNGKGTWSRGSSHA) has biased composition (polar residues). One can recognise a PH 2 domain in the interval 1532-1631 (KKEHQGYLFK…WLDVLSSHTT (100 aa)).

The protein resides in the membrane. It is found in the cytoplasmic vesicle. Its subcellular location is the phagosome membrane. Functionally, GTPase-activating protein for Rac involved in streaming and development. This is Guanine exchange factor for Rac 30 (gxcDD) from Dictyostelium discoideum (Social amoeba).